The sequence spans 195 residues: Thymidine kinase (195 aa).

ATP is bound by residues 9–16 (ATMNAGKS) and 89–92 (DEAQ). Catalysis depends on Glu90, which acts as the Proton acceptor. Cys147, Cys149, Cys184, and His187 together coordinate Zn(2+).

It belongs to the thymidine kinase family. Homotetramer.

It is found in the cytoplasm. It carries out the reaction thymidine + ATP = dTMP + ADP + H(+). In Rhizobium meliloti (strain 1021) (Ensifer meliloti), this protein is Thymidine kinase.